The following is a 194-amino-acid chain: Acireductone dioxygenase 1 (194 aa).

The segment at 1–21 (MEAWYMDDSADDQRKPHHRSP) is disordered. Fe(2+)-binding residues include histidine 87, histidine 89, glutamate 93, and histidine 132. Ni(2+) is bound by residues histidine 87, histidine 89, glutamate 93, and histidine 132.

This sequence belongs to the acireductone dioxygenase (ARD) family. Fe(2+) serves as cofactor. It depends on Ni(2+) as a cofactor.

Its subcellular location is the cytoplasm. The protein resides in the nucleus. The enzyme catalyses 1,2-dihydroxy-5-(methylsulfanyl)pent-1-en-3-one + O2 = 4-methylsulfanyl-2-oxobutanoate + formate + 2 H(+). It catalyses the reaction 1,2-dihydroxy-5-(methylsulfanyl)pent-1-en-3-one + O2 = 3-(methylsulfanyl)propanoate + CO + formate + 2 H(+). It functions in the pathway amino-acid biosynthesis; L-methionine biosynthesis via salvage pathway; L-methionine from S-methyl-5-thio-alpha-D-ribose 1-phosphate: step 5/6. In terms of biological role, catalyzes 2 different reactions between oxygen and the acireductone 1,2-dihydroxy-3-keto-5-methylthiopentene (DHK-MTPene) depending upon the metal bound in the active site. Fe-containing acireductone dioxygenase (Fe-ARD) produces formate and 2-keto-4-methylthiobutyrate (KMTB), the alpha-ketoacid precursor of methionine in the methionine recycle pathway. Ni-containing acireductone dioxygenase (Ni-ARD) produces methylthiopropionate, carbon monoxide and formate, and does not lie on the methionine recycle pathway. This is Acireductone dioxygenase 1 from Physcomitrium patens (Spreading-leaved earth moss).